The primary structure comprises 731 residues: Alpha-catulin (731 aa).

A phosphoserine mark is found at Ser-373 and Ser-537. The tract at residues 535–559 (HLSLPKPTKNSANLKSLKPDKPDSE) is disordered.

The protein belongs to the vinculin/alpha-catenin family. As to quaternary structure, interacts with ARHGEF1. Interacts with Dtna. The interaction is required for correct localization of both Ctnnal1 and Dtna.

It is found in the cytoplasm. The protein localises to the cytoskeleton. The protein resides in the cell membrane. May modulate the Rho pathway signaling by providing a scaffold for the Lbc Rho guanine nucleotide exchange factor (ARHGEF1). The sequence is that of Alpha-catulin (Ctnnal1) from Mus musculus (Mouse).